Reading from the N-terminus, the 1112-residue chain is DNA-directed RNA polymerase subunit beta (1112 aa).

A disordered region spans residues 1087–1112 (VGGRRTPNRPTYENIGGPREMEFSED).

This sequence belongs to the RNA polymerase beta chain family. In terms of assembly, in cyanobacteria the RNAP catalytic core is composed of 2 alpha, 1 beta, 1 beta', 1 gamma and 1 omega subunit. When a sigma factor is associated with the core the holoenzyme is formed, which can initiate transcription.

The catalysed reaction is RNA(n) + a ribonucleoside 5'-triphosphate = RNA(n+1) + diphosphate. In terms of biological role, DNA-dependent RNA polymerase catalyzes the transcription of DNA into RNA using the four ribonucleoside triphosphates as substrates. This Gloeobacter violaceus (strain ATCC 29082 / PCC 7421) protein is DNA-directed RNA polymerase subunit beta.